The following is a 68-amino-acid chain: ATP synthase F(0) complex subunit 8 (68 aa).

Residues 8–24 (VWPTTITPMLLTLFLIT) form a helical membrane-spanning segment. The residue at position 54 (Lys-54) is an N6-acetyllysine; alternate. Lys-54 carries the N6-succinyllysine; alternate modification. Lys-57 is modified (N6-acetyllysine).

It belongs to the ATPase protein 8 family. As to quaternary structure, component of the ATP synthase complex composed at least of ATP5F1A/subunit alpha, ATP5F1B/subunit beta, ATP5MC1/subunit c (homooctomer), MT-ATP6/subunit a, MT-ATP8/subunit 8, ATP5ME/subunit e, ATP5MF/subunit f, ATP5MG/subunit g, ATP5MK/subunit k, ATP5MJ/subunit j, ATP5F1C/subunit gamma, ATP5F1D/subunit delta, ATP5F1E/subunit epsilon, ATP5PF/subunit F6, ATP5PB/subunit b, ATP5PD/subunit d, ATP5PO/subunit OSCP. ATP synthase complex consists of a soluble F(1) head domain (subunits alpha(3) and beta(3)) - the catalytic core - and a membrane F(0) domain - the membrane proton channel (subunits c, a, 8, e, f, g, k and j). These two domains are linked by a central stalk (subunits gamma, delta, and epsilon) rotating inside the F1 region and a stationary peripheral stalk (subunits F6, b, d, and OSCP). Interacts with PRICKLE3.

It localises to the mitochondrion membrane. Subunit 8, of the mitochondrial membrane ATP synthase complex (F(1)F(0) ATP synthase or Complex V) that produces ATP from ADP in the presence of a proton gradient across the membrane which is generated by electron transport complexes of the respiratory chain. ATP synthase complex consist of a soluble F(1) head domain - the catalytic core - and a membrane F(1) domain - the membrane proton channel. These two domains are linked by a central stalk rotating inside the F(1) region and a stationary peripheral stalk. During catalysis, ATP synthesis in the catalytic domain of F(1) is coupled via a rotary mechanism of the central stalk subunits to proton translocation. In vivo, can only synthesize ATP although its ATP hydrolase activity can be activated artificially in vitro. Part of the complex F(0) domain. This chain is ATP synthase F(0) complex subunit 8, found in Pan paniscus (Pygmy chimpanzee).